We begin with the raw amino-acid sequence, 293 residues long: Heterogeneous nuclear ribonucleoprotein D-like-A (293 aa).

A disordered region spans residues 1 to 21 (MAGFGAAPDFNEGSKINASKN). RRM domains lie at 26 to 108 (GKMF…KGKE) and 111 to 188 (KKVF…AAQP). 2 disordered regions span residues 193–224 (RQQQ…GWNQ) and 274–293 (QSTY…YQPY). Positions 202–222 (GGRGAVTGRGGTRGRGRGQGW) are enriched in gly residues.

The protein localises to the nucleus. Its subcellular location is the cytoplasm. Its function is as follows. Acts as a transcriptional regulator. Binds DNA and RNA. The sequence is that of Heterogeneous nuclear ribonucleoprotein D-like-A (hnrnpdl-a) from Xenopus laevis (African clawed frog).